Here is a 429-residue protein sequence, read N- to C-terminus: GDP-fucose protein O-fucosyltransferase 2 (429 aa).

A signal peptide spans 1–21; that stretch reads MATLSFVFLLLGAVSWPPASA. A GDP-beta-L-fucose-binding site is contributed by 53–57; the sequence is PEGFN. E54 (proton acceptor) is an active-site residue. A disulfide bridge links C161 with C192. N189, N209, and N259 each carry an N-linked (GlcNAc...) asparagine glycan. GDP-beta-L-fucose contacts are provided by residues 292–294, D371, and 388–389; these read HLR and TF. A disulfide bridge connects residues C412 and C419.

It belongs to the glycosyltransferase 68 family.

The protein resides in the endoplasmic reticulum. Its subcellular location is the golgi apparatus. The catalysed reaction is L-seryl-[protein] + GDP-beta-L-fucose = 3-O-(alpha-L-fucosyl)-L-seryl-[protein] + GDP + H(+). It carries out the reaction L-threonyl-[protein] + GDP-beta-L-fucose = 3-O-(alpha-L-fucosyl)-L-threonyl-[protein] + GDP + H(+). It functions in the pathway protein modification; protein glycosylation. In terms of biological role, catalyzes the reaction that attaches fucose through an O-glycosidic linkage to a conserved serine or threonine residue in the consensus sequence C1-X-X-S/T-C2 of thrombospondin type I repeats (TSRs) where C1 and C2 are the first and second cysteines of the repeat, respectively. O-fucosylates members of several protein families including the ADAMTS, the thrombospondin (TSP) and spondin families. Required for the proper secretion of ADAMTS family members such as ADAMTSL1 and ADAMTS13. The O-fucosylation of TSRs is also required for restricting epithelial to mesenchymal transition (EMT), maintaining the correct patterning of mesoderm and localization of the definite endoderm. This Pan troglodytes (Chimpanzee) protein is GDP-fucose protein O-fucosyltransferase 2 (POFUT2).